The following is a 557-amino-acid chain: Urocanate hydratase (557 aa).

NAD(+) contacts are provided by residues 52 to 53 (GG), glutamine 130, 176 to 178 (GMG), glutamate 196, arginine 201, 242 to 243 (NA), 263 to 267 (QTSAH), 273 to 274 (YL), and tyrosine 322. Residue cysteine 410 is part of the active site. Residue glycine 492 coordinates NAD(+).

This sequence belongs to the urocanase family. It depends on NAD(+) as a cofactor.

It is found in the cytoplasm. It catalyses the reaction 4-imidazolone-5-propanoate = trans-urocanate + H2O. The protein operates within amino-acid degradation; L-histidine degradation into L-glutamate; N-formimidoyl-L-glutamate from L-histidine: step 2/3. Functionally, catalyzes the conversion of urocanate to 4-imidazolone-5-propionate. In Pseudoalteromonas translucida (strain TAC 125), this protein is Urocanate hydratase.